A 173-amino-acid chain; its full sequence is Ribosome maturation factor RimM (173 aa).

A PRC barrel domain is found at 98–170 (EDEYYWCDLI…RMLITPLEGL (73 aa)).

Belongs to the RimM family. Binds ribosomal protein uS19.

It localises to the cytoplasm. In terms of biological role, an accessory protein needed during the final step in the assembly of 30S ribosomal subunit, possibly for assembly of the head region. Essential for efficient processing of 16S rRNA. May be needed both before and after RbfA during the maturation of 16S rRNA. It has affinity for free ribosomal 30S subunits but not for 70S ribosomes. The protein is Ribosome maturation factor RimM of Pelobacter propionicus (strain DSM 2379 / NBRC 103807 / OttBd1).